The chain runs to 141 residues: Large ribosomal subunit protein uL11 (141 aa).

Belongs to the universal ribosomal protein uL11 family. As to quaternary structure, part of the ribosomal stalk of the 50S ribosomal subunit. Interacts with L10 and the large rRNA to form the base of the stalk. L10 forms an elongated spine to which L12 dimers bind in a sequential fashion forming a multimeric L10(L12)X complex. In terms of processing, one or more lysine residues are methylated.

Forms part of the ribosomal stalk which helps the ribosome interact with GTP-bound translation factors. This is Large ribosomal subunit protein uL11 from Phytoplasma australiense.